The following is a 520-amino-acid chain: Probable glycine dehydrogenase (decarboxylating) subunit 2 (520 aa).

A disordered region spans residues 1 to 29 (MWRQSRWNEPLITEMSRRGRRGALPPRPD). Lys279 carries the post-translational modification N6-(pyridoxal phosphate)lysine.

Belongs to the GcvP family. C-terminal subunit subfamily. In terms of assembly, the glycine cleavage system is composed of four proteins: P, T, L and H. In this organism, the P 'protein' is a heterodimer of two subunits. It depends on pyridoxal 5'-phosphate as a cofactor.

It catalyses the reaction N(6)-[(R)-lipoyl]-L-lysyl-[glycine-cleavage complex H protein] + glycine + H(+) = N(6)-[(R)-S(8)-aminomethyldihydrolipoyl]-L-lysyl-[glycine-cleavage complex H protein] + CO2. In terms of biological role, the glycine cleavage system catalyzes the degradation of glycine. The P protein binds the alpha-amino group of glycine through its pyridoxal phosphate cofactor; CO(2) is released and the remaining methylamine moiety is then transferred to the lipoamide cofactor of the H protein. In Aeropyrum pernix (strain ATCC 700893 / DSM 11879 / JCM 9820 / NBRC 100138 / K1), this protein is Probable glycine dehydrogenase (decarboxylating) subunit 2.